The primary structure comprises 763 residues: Phosphoglycerol transferase I (763 aa).

4 consecutive transmembrane segments (helical) span residues 1-21, 26-46, 77-97, and 108-128; these read MSEL…AWKA, WWFA…ITLY, ILPG…LGWI, and FGYS…SPAF.

The protein belongs to the OpgB family.

The protein localises to the cell inner membrane. It catalyses the reaction a phosphatidylglycerol + a membrane-derived-oligosaccharide D-glucose = a 1,2-diacyl-sn-glycerol + a membrane-derived-oligosaccharide 6-(glycerophospho)-D-glucose.. Its pathway is glycan metabolism; osmoregulated periplasmic glucan (OPG) biosynthesis. Its function is as follows. Transfers a phosphoglycerol residue from phosphatidylglycerol to the membrane-bound nascent glucan backbones. This Escherichia fergusonii (strain ATCC 35469 / DSM 13698 / CCUG 18766 / IAM 14443 / JCM 21226 / LMG 7866 / NBRC 102419 / NCTC 12128 / CDC 0568-73) protein is Phosphoglycerol transferase I.